The primary structure comprises 191 residues: Elongation factor P (191 aa).

Lysine 34 carries the N6-(3,6-diaminohexanoyl)-5-hydroxylysine modification.

The protein belongs to the elongation factor P family. In terms of processing, may be beta-lysylated on the epsilon-amino group of Lys-34 by the combined action of EpmA and EpmB, and then hydroxylated on the C5 position of the same residue by EpmC (if this protein is present). Lysylation is critical for the stimulatory effect of EF-P on peptide-bond formation. The lysylation moiety may extend toward the peptidyltransferase center and stabilize the terminal 3-CCA end of the tRNA. Hydroxylation of the C5 position on Lys-34 may allow additional potential stabilizing hydrogen-bond interactions with the P-tRNA.

The protein resides in the cytoplasm. It functions in the pathway protein biosynthesis; polypeptide chain elongation. Involved in peptide bond synthesis. Alleviates ribosome stalling that occurs when 3 or more consecutive Pro residues or the sequence PPG is present in a protein, possibly by augmenting the peptidyl transferase activity of the ribosome. Modification of Lys-34 is required for alleviation. The chain is Elongation factor P from Psychrobacter sp. (strain PRwf-1).